The sequence spans 757 residues: MILYIVLPFYVRTKPYSILPSYSSLQWITNAWCSLPSIYILCHCSKHQEEITILALKPLIAMNNSEEWPLKHVQPPKLSFRHLLSRSVTDAPSLRVRWFYAVDRPLRKSRTGPTEIKKAKNFLPFSAEDSEHIEKSYLKAVENDGQSEPVNVNEDYLYSVNVVSRELSPIYWDGPVYRILRGTWFFSRGDKLYPCEENLATQVEEGYLNSCPYREFSNEKDSAAAQSKTWALLGRYTGGFVQYTGSRNARLVYDDFYRNVSVKIMNRFSPASFHRSDKLVRGYELDMLESNSKPSTPVPTEELTSTTLLNDSSDPSDNFTPSNTESTIDLPSATDASHLMSRPDREVNHLILCCHGIGQKMGERVETVSFVKDISNFRKTLKKTFNSSPDLQAVYPKLKGGGNGVQCLPLLWRQDIRFGMARDLDSSFADDDDDDDESLNMSRDLALDDLEDDSIPTLDNINIPTVTGLRNIISDVLLDVLLYCQPNYRDKILAAVVKRLNRLYNLYKKNVPSFNGHVSLLGHSLGALILFDIIRYQGNIKYSKLQLDFPVANFFALGSPLGLFQMLNGKKIAGPIPKTNLTRSLSYSEQSFDSGVSILSCQNFYNIFHPTDPISYRVEPLVVKQMARLKPQKISHFRPHQDLSSSGVGHKIAGGALNVLSGLRSGIANTLILKSLSYASVFNEATADSHDESQGAENIRDWHIDERMYRLNKTGRIDFMLQEGALDTSYSYVSAMNAHSEYWKNVDLAHFILTQLL.

The transit peptide at 1 to 13 (MILYIVLPFYVRT) directs the protein to the mitochondrion. Positions 289-330 (ESNSKPSTPVPTEELTSTTLLNDSSDPSDNFTPSNTESTIDL) are disordered. Over residues 302 to 329 (ELTSTTLLNDSSDPSDNFTPSNTESTID) the composition is skewed to polar residues. Residue serine 524 is part of the active site. The 211-residue stretch at 547–757 (LDFPVANFFA…LAHFILTQLL (211 aa)) folds into the DDHD domain.

This sequence belongs to the PA-PLA1 family.

It localises to the mitochondrion. Its function is as follows. Probable phospholipase that hydrolyzes phosphatidic acid. The protein is Probable phospholipase C20G8.02, mitochondrial of Schizosaccharomyces pombe (strain 972 / ATCC 24843) (Fission yeast).